Here is a 156-residue protein sequence, read N- to C-terminus: Large ribosomal subunit protein bL17 (156 aa).

Positions 127–156 (RATRAAASKKAAEEKAAEAAEEKDEAAEEK) are disordered. Basic and acidic residues predominate over residues 136–146 (KAAEEKAAEAA). The segment covering 147–156 (EEKDEAAEEK) has biased composition (acidic residues).

The protein belongs to the bacterial ribosomal protein bL17 family. Part of the 50S ribosomal subunit. Contacts protein L32.

This chain is Large ribosomal subunit protein bL17, found in Corynebacterium urealyticum (strain ATCC 43042 / DSM 7109).